A 62-amino-acid chain; its full sequence is Large ribosomal subunit protein bL28 (62 aa).

Belongs to the bacterial ribosomal protein bL28 family.

The protein is Large ribosomal subunit protein bL28 of Desulforamulus reducens (strain ATCC BAA-1160 / DSM 100696 / MI-1) (Desulfotomaculum reducens).